Reading from the N-terminus, the 247-residue chain is Carboxy-S-adenosyl-L-methionine synthase (247 aa).

S-adenosyl-L-methionine is bound by residues tyrosine 39, 64–66 (GCS), 89–90 (DN), 117–118 (DI), asparagine 132, and arginine 199.

It belongs to the class I-like SAM-binding methyltransferase superfamily. Cx-SAM synthase family. As to quaternary structure, homodimer.

The catalysed reaction is prephenate + S-adenosyl-L-methionine = carboxy-S-adenosyl-L-methionine + 3-phenylpyruvate + H2O. Functionally, catalyzes the conversion of S-adenosyl-L-methionine (SAM) to carboxy-S-adenosyl-L-methionine (Cx-SAM). The sequence is that of Carboxy-S-adenosyl-L-methionine synthase from Escherichia coli O17:K52:H18 (strain UMN026 / ExPEC).